Reading from the N-terminus, the 371-residue chain is Deoxyuridine 5'-triphosphate nucleotidohydrolase (371 aa).

Substrate-binding positions include 260–262 (RSS) and 366–367 (FG). Positions 350 to 371 (NEFDAEAPPSERGTGGFGSTGI) are disordered. Residues 362 to 371 (GTGGFGSTGI) show a composition bias toward gly residues.

Belongs to the dUTPase family. The cofactor is Mg(2+).

The catalysed reaction is dUTP + H2O = dUMP + diphosphate + H(+). Its function is as follows. Involved in nucleotide metabolism: produces dUMP, the immediate precursor of thymidine nucleotides and decreases the intracellular concentration of dUTP to avoid uracil incorporation into viral DNA. This chain is Deoxyuridine 5'-triphosphate nucleotidohydrolase, found in Homo sapiens (Human).